A 598-amino-acid chain; its full sequence is Elongation factor 4 (598 aa).

A tr-type G domain is found at 2-184; sequence KQIRNFSIIA…RLVKEIPAPE (183 aa). Residues 14 to 19 and 131 to 134 each bind GTP; these read DHGKST and NKID.

Belongs to the TRAFAC class translation factor GTPase superfamily. Classic translation factor GTPase family. LepA subfamily.

Its subcellular location is the cell inner membrane. It carries out the reaction GTP + H2O = GDP + phosphate + H(+). Functionally, required for accurate and efficient protein synthesis under certain stress conditions. May act as a fidelity factor of the translation reaction, by catalyzing a one-codon backward translocation of tRNAs on improperly translocated ribosomes. Back-translocation proceeds from a post-translocation (POST) complex to a pre-translocation (PRE) complex, thus giving elongation factor G a second chance to translocate the tRNAs correctly. Binds to ribosomes in a GTP-dependent manner. This Photorhabdus laumondii subsp. laumondii (strain DSM 15139 / CIP 105565 / TT01) (Photorhabdus luminescens subsp. laumondii) protein is Elongation factor 4.